The primary structure comprises 356 residues: Thrombomodulin (356 aa).

Over 1–296 (RGARGETEGR…SPAPAGPLHS (296 aa)) the chain is Extracellular. EGF-like domains lie at 17–57 (GAWA…RSCG) and 60–98 (AEHP…HRCE). 18 disulfide bridges follow: Cys-21–Cys-32, Cys-28–Cys-41, Cys-43–Cys-56, Cys-64–Cys-72, Cys-68–Cys-82, Cys-84–Cys-97, Cys-103–Cys-114, Cys-110–Cys-123, Cys-125–Cys-136, Cys-143–Cys-152, Cys-148–Cys-162, Cys-164–Cys-178, Cys-182–Cys-191, Cys-187–Cys-199, Cys-201–Cys-213, Cys-219–Cys-228, Cys-224–Cys-237, and Cys-239–Cys-253. Positions 99-137 (DVDDCAQLPSPCPQRCVNTEGGFQCHCDTGYELVDGECV) constitute an EGF-like 3; calcium-binding domain. EGF-like domains are found at residues 139 to 179 (PVDP…HKCQ) and 178 to 214 (CQMF…STCT). Positions 215–254 (DINECDTNICPGQCHNLPGTYECICGPDSALSGQIGIDCD) constitute an EGF-like 6; calcium-binding domain. Positions 255–290 (PTQVNEERGTPEDYGGSGEPPVSPTPGATARPSPAP) are disordered. The O-linked (Xyl...) (chondroitin sulfate) serine glycan is linked to Ser-271. A helical membrane pass occupies residues 297-320 (GVLVGISIASLSLVVALLALLCHL). Residues 321 to 356 (RKKQGASRGELEYKCGVPAKELMLQQVKTERTPQKL) lie on the Cytoplasmic side of the membrane.

In terms of assembly, interacts with ITGAL, ITGAM and ITGB2. Interacts with thrombin/F2; this interaction switches the specificity of thrombin from a procoagulant to an anticoagulant and antifibrinolytic protease. Interacts with ANGP1 and ANGP2; these interactions significantly inhibit the generation of activated PC and TAFIa/CPB2 by the thrombin/thrombomodulin complex. Interacts with PF4; this interaction enhances generation of activated protein C. Interacts with HMGB1; this interaction inhibits HMGB1 inflammatory activity. Endothelial cells are unique in synthesizing thrombomodulin.

It localises to the membrane. Its function is as follows. Endothelial cell receptor that plays a critical role in regulating several physiological processes including hemostasis, coagulation, fibrinolysis, inflammation, and angiogenesis. Acts as a cofactor for thrombin activation of protein C/PROC on the surface of vascular endothelial cells leading to initiation of the activated protein C anticoagulant pathway. Also accelerates the activation of the plasma carboxypeptidase B2/CPB2, which catalyzes removal of C-terminal basic amino acids from its substrates including kinins or anaphylatoxins leading to fibrinolysis inhibition. Plays critical protective roles in changing the cleavage specificity of protease-activated receptor 1/PAR1, inhibiting endothelial cell permeability and inflammation. Suppresses inflammation distinctly from its anticoagulant cofactor activity by sequestering HMGB1 thereby preventing it from engaging cellular receptors such as RAGE and contributing to the inflammatory response. The protein is Thrombomodulin (THBD) of Bos taurus (Bovine).